Consider the following 452-residue polypeptide: cAMP/cGMP-dependent 3',5'-cAMP/cGMP phosphodiesterase A (452 aa).

The signal sequence occupies residues 1–23; it reads MALNKKLISLLLLIFIILNIVNS. Positions 24–49 are excised as a propeptide; that stretch reads HQQEDCDDDDEDIGISAERSERRSVK. Asn101, Asn141, and Asn277 each carry an N-linked (GlcNAc...) asparagine glycan.

It belongs to the cyclic nucleotide phosphodiesterase class-II family.

It localises to the secreted. It is found in the extracellular space. The protein localises to the cell surface. It catalyses the reaction 3',5'-cyclic AMP + H2O = AMP + H(+). The enzyme catalyses 3',5'-cyclic GMP + H2O = GMP + H(+). Its activity is regulated as follows. Inhibited by dithiotreitol (DTT). Phosphodiesterase which displays a preference for cAMP over cGMP. Involved in the degradation of extracellular cAMP. Maintains the responsiveness of cells to the chemoattractant cAMP during the aggregation phase of development. The protein is cAMP/cGMP-dependent 3',5'-cAMP/cGMP phosphodiesterase A (pdsA) of Dictyostelium discoideum (Social amoeba).